We begin with the raw amino-acid sequence, 152 residues long: Ubiquitin-conjugating enzyme E2 B (152 aa).

Residues 4–150 (PARRRLMRDF…VSAIVEQSWN (147 aa)) form the UBC core domain. Catalysis depends on Cys88, which acts as the Glycyl thioester intermediate.

The protein belongs to the ubiquitin-conjugating enzyme family. As to quaternary structure, interacts with RAD18, UBR2 and WAC.

The protein localises to the cell membrane. Its subcellular location is the nucleus. It carries out the reaction S-ubiquitinyl-[E1 ubiquitin-activating enzyme]-L-cysteine + [E2 ubiquitin-conjugating enzyme]-L-cysteine = [E1 ubiquitin-activating enzyme]-L-cysteine + S-ubiquitinyl-[E2 ubiquitin-conjugating enzyme]-L-cysteine.. It participates in protein modification; protein ubiquitination. E2 ubiquitin-conjugating enzyme that accepts ubiquitin from the ubiquitin-activating enzyme E1 and transfers it to a E3 ubiquitin-protein ligase. In vitro catalyzes 'Lys-11'-, as well as 'Lys-48'- and 'Lys-63'-linked polyubiquitination. Together with the E3 enzyme BRE1 (RNF20 and/or RNF40), plays a role in transcription regulation by catalyzing the monoubiquitination of histone H2B at 'Lys-120' to form H2BK120ub1. H2BK120ub1 gives a specific tag for epigenetic transcriptional activation, elongation by RNA polymerase II, telomeric silencing, and is also a prerequisite for H3K4me and H3K79me formation. May play a role in DNA repair. Associates to the E3 ligase RAD18 to form the UBE2B-RAD18 ubiquitin ligase complex involved in mono-ubiquitination of DNA-associated PCNA on 'Lys-164'. In association with the E3 enzyme UBR4, is involved in N-end rule-dependent protein degradation. May be involved in neurite outgrowth. This is Ubiquitin-conjugating enzyme E2 B (UBE2B) from Bos taurus (Bovine).